The following is a 591-amino-acid chain: Probable anion transporter 4, chloroplastic (591 aa).

The disordered stretch occupies residues 1–38 (MAMGAVLSSRTFASPLSSSGKQHPPQNNKCTCSSPPTR). The N-terminal 76 residues, 1 to 76 (MAMGAVLSSR…LSARFHQPVV (76 aa)), are a transit peptide targeting the chloroplast. Residues 8–36 (SSRTFASPLSSSGKQHPPQNNKCTCSSPP) show a composition bias toward polar residues. 11 helical membrane passes run 184–204 (VVLL…NMSI), 220–240 (VGLI…LGGI), 249–269 (VVLG…PLAA), 271–291 (IGLP…GVAM), 313–333 (LVYS…PLLI), 336–356 (FGWP…FALW), 402–422 (VWAL…LLTW), 440–460 (LLCV…GWIA), 475–495 (KIMQ…LSKV), 531–551 (AGVL…FGTA), and 565–585 (VFQV…VFST).

Belongs to the major facilitator superfamily. Sodium/anion cotransporter (TC 2.A.1.14) family.

It localises to the plastid. It is found in the chloroplast membrane. In terms of biological role, probable anion transporter. This Oryza sativa subsp. japonica (Rice) protein is Probable anion transporter 4, chloroplastic (PHT4;4).